A 1050-amino-acid polypeptide reads, in one-letter code: Probable beta-glucosidase E (1050 aa).

Residues 1 to 87 (MPPPDSNPGS…RSSSTNGGHN (87 aa)) form a disordered region. At 1–174 (MPPPDSNPGS…VKYARIWRRT (174 aa)) the chain is on the cytoplasmic side. Residues 11–20 (FRDHLKHDNK) show a composition bias toward basic and acidic residues. Residues 47–56 (SPRSASASSS) are compositionally biased toward low complexity. The segment covering 78-87 (RSSSTNGGHN) has biased composition (polar residues). A helical; Signal-anchor for type II membrane protein transmembrane segment spans residues 175–195 (LVVVIVALALLVWGFLRFTAA). Over 196-1050 (QRQGPKVWPM…SRDLPLQAKY (855 aa)) the chain is Extracellular. N-linked (GlcNAc...) asparagine glycans are attached at residues Asn236, Asn244, Asn300, and Asn430. Asp458 is an active-site residue. 7 N-linked (GlcNAc...) asparagine glycosylation sites follow: Asn501, Asn540, Asn605, Asn884, Asn920, Asn929, and Asn993.

Belongs to the glycosyl hydrolase 3 family.

It localises to the cell membrane. The enzyme catalyses Hydrolysis of terminal, non-reducing beta-D-glucosyl residues with release of beta-D-glucose.. The protein operates within glycan metabolism; cellulose degradation. Beta-glucosidases are one of a number of cellulolytic enzymes involved in the degradation of cellulosic biomass. Catalyzes the last step releasing glucose from the inhibitory cellobiose. This Aspergillus clavatus (strain ATCC 1007 / CBS 513.65 / DSM 816 / NCTC 3887 / NRRL 1 / QM 1276 / 107) protein is Probable beta-glucosidase E (bglE).